The sequence spans 155 residues: Small ribosomal subunit protein uS7c (155 aa).

Belongs to the universal ribosomal protein uS7 family. In terms of assembly, part of the 30S ribosomal subunit.

The protein localises to the plastid. Its subcellular location is the chloroplast. In terms of biological role, one of the primary rRNA binding proteins, it binds directly to 16S rRNA where it nucleates assembly of the head domain of the 30S subunit. The polypeptide is Small ribosomal subunit protein uS7c (rps7) (Cedrus deodara (Deodar cedar)).